The sequence spans 135 residues: FK506-binding protein 2 (135 aa).

Positions 1-20 (MRVPIITTLLTLALTGLSQA) are cleaved as a signal peptide. Positions 40-128 (GDTVKMHYRG…IFQTELLEIE (89 aa)) constitute a PPIase FKBP-type domain. The short motif at 132–135 (KDEL) is the Prevents secretion from ER element.

The protein belongs to the FKBP-type PPIase family. FKBP2 subfamily.

The protein localises to the endoplasmic reticulum. It carries out the reaction [protein]-peptidylproline (omega=180) = [protein]-peptidylproline (omega=0). Inhibited by both FK506 and rapamycin. Its function is as follows. PPIases accelerate the folding of proteins. It catalyzes the cis-trans isomerization of proline imidic peptide bonds in oligopeptides. The protein is FK506-binding protein 2 (fkbB) of Emericella nidulans (strain FGSC A4 / ATCC 38163 / CBS 112.46 / NRRL 194 / M139) (Aspergillus nidulans).